Reading from the N-terminus, the 198-residue chain is Na(+)-translocating NADH-quinone reductase subunit E (198 aa).

6 helical membrane passes run 11 to 31 (AVFV…FLAV), 35 to 55 (VSTA…AVPI), 77 to 97 (FLNF…LEMI), 110 to 130 (GIFL…SFMV), 140 to 160 (IVYG…MAGI), and 176 to 196 (LGIT…FSGV).

It belongs to the NqrDE/RnfAE family. Composed of six subunits; NqrA, NqrB, NqrC, NqrD, NqrE and NqrF.

The protein localises to the cell inner membrane. The catalysed reaction is a ubiquinone + n Na(+)(in) + NADH + H(+) = a ubiquinol + n Na(+)(out) + NAD(+). Functionally, NQR complex catalyzes the reduction of ubiquinone-1 to ubiquinol by two successive reactions, coupled with the transport of Na(+) ions from the cytoplasm to the periplasm. NqrA to NqrE are probably involved in the second step, the conversion of ubisemiquinone to ubiquinol. This chain is Na(+)-translocating NADH-quinone reductase subunit E, found in Klebsiella pneumoniae subsp. pneumoniae (strain ATCC 700721 / MGH 78578).